The primary structure comprises 196 residues: Holliday junction branch migration complex subunit RuvA (196 aa).

A domain I region spans residues 1–63; it reads MINKIYGKVI…ENELKLFGFL (63 aa). Positions 64 to 139 are domain II; it reads NSDERETFKS…KLLINNELES (76 aa). Ser-139 is a region of interest (flexible linker). Positions 139-196 are domain III; that stretch reads SSLFRFKELEESIVSMGFDRKIVNSKLKEAFNLVEFSNLKDSEKEQFLFKEVLKRMSN.

This sequence belongs to the RuvA family. As to quaternary structure, homotetramer. Forms an RuvA(8)-RuvB(12)-Holliday junction (HJ) complex. HJ DNA is sandwiched between 2 RuvA tetramers; dsDNA enters through RuvA and exits via RuvB. An RuvB hexamer assembles on each DNA strand where it exits the tetramer. Each RuvB hexamer is contacted by two RuvA subunits (via domain III) on 2 adjacent RuvB subunits; this complex drives branch migration. In the full resolvosome a probable DNA-RuvA(4)-RuvB(12)-RuvC(2) complex forms which resolves the HJ.

It is found in the cytoplasm. Its function is as follows. The RuvA-RuvB-RuvC complex processes Holliday junction (HJ) DNA during genetic recombination and DNA repair, while the RuvA-RuvB complex plays an important role in the rescue of blocked DNA replication forks via replication fork reversal (RFR). RuvA specifically binds to HJ cruciform DNA, conferring on it an open structure. The RuvB hexamer acts as an ATP-dependent pump, pulling dsDNA into and through the RuvAB complex. HJ branch migration allows RuvC to scan DNA until it finds its consensus sequence, where it cleaves and resolves the cruciform DNA. The polypeptide is Holliday junction branch migration complex subunit RuvA (Borreliella afzelii (strain PKo) (Borrelia afzelii)).